The sequence spans 425 residues: MADDGGDEKKQVAKFELERETELRFEVEASQTVQMELLTGMAEVFGTELTRNKKFTFDAGAKVAVFTWHGCTVQLSGRTEVAYVSKDTPMLLYLNTHTALEQMRRQAEREDERGPRVMVVGPTDVGKSTVCRLLLNYAVRLGRRPTFVELDVGQGSVSIPGTMGALYIERPADVEEGFSLQAPLVYHFGSTTPGTNIKLYNKITSRLADVFNQRCEVNRRASVSGCVINTCGWVKGSGYQALVHAASAFEVDVVVVLDQERLYNELKRDLPHFVRTVLLPKSGGVVERSKDFRRECRDDRIREYFYGFRGCFYPHAFDVKFSDVKIYKVGAPTIPDSCLPLGMSQEDNQLKLVPVTPGRDMVHHLLSVSMADSPDDNISETSVAGFIVVTGVDLERQVFTVLSPAPRPLPKNFLLIMDIRFMDLK.

ATP contacts are provided by residues Glu-22, Lys-62, and 124 to 129 (DVGKST).

It belongs to the Clp1 family. Clp1 subfamily. In terms of assembly, component of the tRNA splicing endonuclease complex. Component of pre-mRNA cleavage complex II (CF-II).

Its subcellular location is the nucleus. The catalysed reaction is a 5'-end dephospho-2'-deoxyribonucleoside-DNA + ATP = a 5'-end 5'-phospho-2'-deoxyribonucleoside-DNA + ADP + H(+). It catalyses the reaction a 5'-end dephospho-ribonucleoside-RNA + ATP = a 5'-end 5'-phospho-ribonucleoside-RNA + ADP + H(+). Polynucleotide kinase that can phosphorylate the 5'-hydroxyl groups of double-stranded RNA (dsRNA), single-stranded RNA (ssRNA), double stranded DNA (dsDNA) and double-stranded DNA:RNA hybrids. dsRNA is phosphorylated more efficiently than dsDNA, and the RNA component of a DNA:RNA hybrid is phosphorylated more efficiently than the DNA component. Plays a role in both tRNA splicing and mRNA 3'-end formation. Component of the tRNA splicing endonuclease complex: phosphorylates the 5'-terminus of the tRNA 3'-exon during tRNA splicing; this phosphorylation event is a prerequisite for the subsequent ligation of the two exon halves and the production of a mature tRNA. Its role in tRNA splicing and maturation is required for cerebellar development. Component of the pre-mRNA cleavage complex II (CF-II), which seems to be required for mRNA 3'-end formation. Also phosphorylates the 5'-terminus of exogenously introduced short interfering RNAs (siRNAs), which is a necessary prerequisite for their incorporation into the RNA-induced silencing complex (RISC). However, endogenous siRNAs and microRNAs (miRNAs) that are produced by the cleavage of dsRNA precursors by dicer1 already contain a 5'-phosphate group, so this protein may be dispensible for normal RNA-mediated gene silencing. The sequence is that of Polyribonucleotide 5'-hydroxyl-kinase Clp1 from Gallus gallus (Chicken).